A 216-amino-acid chain; its full sequence is Cytidylate kinase (216 aa).

10–18 (GPAAAGKST) serves as a coordination point for ATP.

It belongs to the cytidylate kinase family. Type 1 subfamily.

It is found in the cytoplasm. The enzyme catalyses CMP + ATP = CDP + ADP. It catalyses the reaction dCMP + ATP = dCDP + ADP. This chain is Cytidylate kinase, found in Macrococcus caseolyticus (strain JCSC5402) (Macrococcoides caseolyticum).